Here is a 176-residue protein sequence, read N- to C-terminus: Oleosin Ara h 14.0103 (176 aa).

Ala2 is subject to N-acetylalanine; alternate. 3 helical membrane passes run 50 to 70 (IIAV…SGLS), 75 to 95 (IIGL…IVPA), and 96 to 116 (VVTI…GLTG). Residues 156–176 (KTKDAGQEIQTKAQDVKRSSS) form a disordered region.

The protein belongs to the oleosin family. In terms of tissue distribution, expressed in seeds (at protein level).

It localises to the lipid droplet. Its subcellular location is the membrane. May have a structural role to stabilize the lipid body during desiccation of the seed by preventing coalescence of the oil. Probably interacts with both lipid and phospholipid moieties of lipid bodies. May also provide recognition signals for specific lipase anchorage in lipolysis during seedling growth. In Arachis hypogaea (Peanut), this protein is Oleosin Ara h 14.0103.